The following is an 853-amino-acid chain: FIGNL1-interacting regulator of recombination and mitosis (853 aa).

Ser43 and Ser744 each carry phosphoserine; by PLK1. N6-acetyllysine is present on Lys792.

Interacts (via its N-terminal region) with PLK1; controls PLK1 kinase activity. Interacts (via the KVVXF motif) with PPP1CC; controls PLK1 kinase activity. Interacts with FIGNL1; may regulate homologous recombination. Phosphorylation at Ser-43 by PLK1 strengthens FIRRM-PLK1 interaction. Phosphorylation at Ser-744 by PLK1 negatively regulates its interaction with PPP1CC.

Its subcellular location is the chromosome. The protein resides in the centromere. It localises to the kinetochore. It is found in the nucleus. The protein localises to the midbody. Its subcellular location is the cytoplasm. The protein resides in the cytoskeleton. It localises to the spindle. Its function is as follows. Regulates PLK1 kinase activity at kinetochores and promotes faithful chromosome segregation in prometaphase by bridging kinase and phosphatase activities. Phosphorylation of FIRRM by PLK1 negatively regulates its interaction with the phosphatase, PPP1CC, thus creating a negative feedback loop for maintaining proper PLK1 kinase activity during mitosis. In complex with FIGL1 may regulate homologous recombination. The chain is FIGNL1-interacting regulator of recombination and mitosis from Homo sapiens (Human).